Consider the following 105-residue polypeptide: Antitoxin YfjZ (105 aa).

Belongs to the CbeA/YafW/YfjZ antitoxin family.

Antitoxin component of a type IV toxin-antitoxin (TA) system. Antitoxin that counteracts the effect of cognate toxin YpjF. Also counteracts the effect of non-cognate toxins CbtA and YfkI. This chain is Antitoxin YfjZ (yfjZ), found in Escherichia coli (strain K12).